Reading from the N-terminus, the 220-residue chain is MSIGYKDNLMSTILAKDRKCEFPINFECSPSQITLMPEMFSFNNERKYQTLIPLMKTSHLIDDDLKDKLNKCAFDFFSGKQANRTSDGTISRLTASGKTSPILPLQNINIVKAENTGNGKSDPYSSIKISKPTKTVIKLKSTKTNTAGQRTRHFCKICSTGFTTSGHLSRHNRIHTGEKNHICPHEGCGQRFSRHDNCNQHYRTHANKKKRNWKRREASS.

2 consecutive C2H2-type zinc fingers follow at residues 153 to 175 (HFCKICSTGFTTSGHLSRHNRIH) and 181 to 205 (HICPHEGCGQRFSRHDNCNQHYRTH).

The protein localises to the nucleus. In terms of biological role, transcriptional repressor. The sequence is that of Probable transcriptional regulator NRG2 (NRG2) from Saccharomyces cerevisiae (strain ATCC 204508 / S288c) (Baker's yeast).